A 515-amino-acid chain; its full sequence is Vacuolar segregation protein PEP7 (515 aa).

The segment at 6-29 (VSCPICLRKFDNLQALNAHLDVEH) adopts a C2H2-type zinc-finger fold. Positions 36-58 (DSLGSNDSRLVNGKQKKARSVDS) are disordered. An FYVE-type 1; atypical zinc finger spans residues 72–137 (KKGKSCCHTC…CCHDCFVTKP (66 aa)). Positions 78, 81, 94, 97, 102, 105, 129, 132, 221, 224, 237, 240, 245, 252, 289, and 292 each coordinate Zn(2+). The FYVE-type 2 zinc-finger motif lies at 215 to 297 (DRSVLFCNIC…LCSHCIDMLF (83 aa)).

Interacts with VPS21, VPS45, PEP3 and PEP5.

It is found in the vacuole membrane. In terms of biological role, required for vacuole segregation and vacuole protein sorting. Possibly part of a complex which tethers the vacuole membrane to microtubules, either directly or via kinesin or dynein-like motor proteins. Probably functions in several interorganelle traffic pathways. In Saccharomyces cerevisiae (strain ATCC 204508 / S288c) (Baker's yeast), this protein is Vacuolar segregation protein PEP7 (PEP7).